The following is a 260-amino-acid chain: tRNA1(Val) (adenine(37)-N6)-methyltransferase (260 aa).

It belongs to the methyltransferase superfamily. tRNA (adenine-N(6)-)-methyltransferase family.

The protein resides in the cytoplasm. It catalyses the reaction adenosine(37) in tRNA1(Val) + S-adenosyl-L-methionine = N(6)-methyladenosine(37) in tRNA1(Val) + S-adenosyl-L-homocysteine + H(+). In terms of biological role, specifically methylates the adenine in position 37 of tRNA(1)(Val) (anticodon cmo5UAC). This chain is tRNA1(Val) (adenine(37)-N6)-methyltransferase, found in Serratia proteamaculans (strain 568).